A 219-amino-acid polypeptide reads, in one-letter code: Probable 3-beta-hydroxysteroid-Delta(8),Delta(7)-isomerase (219 aa).

The next 4 membrane-spanning stretches (helical) occupy residues Ile29–Gly49, Leu62–Phe82, Val119–Ala139, and Phe181–Ile201. One can recognise an EXPERA domain in the interval Thr58–Ala200.

Belongs to the EBP family.

Its subcellular location is the endoplasmic reticulum membrane. It carries out the reaction lathosterol = 5alpha-cholest-8-en-3beta-ol. The protein operates within steroid biosynthesis; sterol biosynthesis. Its function is as follows. Catalyzes the conversion of Delta(8)-sterols to their corresponding Delta(7)-isomers. The chain is Probable 3-beta-hydroxysteroid-Delta(8),Delta(7)-isomerase from Oryza sativa subsp. japonica (Rice).